A 159-amino-acid chain; its full sequence is Transcription elongation factor GreA (159 aa).

A coiled-coil region spans residues 14-76; that stretch reads VKKLEEELEY…QLENMLRNAN (63 aa).

The protein belongs to the GreA/GreB family.

Functionally, necessary for efficient RNA polymerase transcription elongation past template-encoded arresting sites. The arresting sites in DNA have the property of trapping a certain fraction of elongating RNA polymerases that pass through, resulting in locked ternary complexes. Cleavage of the nascent transcript by cleavage factors such as GreA or GreB allows the resumption of elongation from the new 3'terminus. GreA releases sequences of 2 to 3 nucleotides. The chain is Transcription elongation factor GreA from Clostridium novyi (strain NT).